Here is a 207-residue protein sequence, read N- to C-terminus: Crossover junction endodeoxyribonuclease RuvC (207 aa).

Residues D11, E71, and D143 contribute to the active site. 3 residues coordinate Mg(2+): D11, E71, and D143.

It belongs to the RuvC family. Homodimer which binds Holliday junction (HJ) DNA. The HJ becomes 2-fold symmetrical on binding to RuvC with unstacked arms; it has a different conformation from HJ DNA in complex with RuvA. In the full resolvosome a probable DNA-RuvA(4)-RuvB(12)-RuvC(2) complex forms which resolves the HJ. Mg(2+) is required as a cofactor.

Its subcellular location is the cytoplasm. The catalysed reaction is Endonucleolytic cleavage at a junction such as a reciprocal single-stranded crossover between two homologous DNA duplexes (Holliday junction).. The RuvA-RuvB-RuvC complex processes Holliday junction (HJ) DNA during genetic recombination and DNA repair. Endonuclease that resolves HJ intermediates. Cleaves cruciform DNA by making single-stranded nicks across the HJ at symmetrical positions within the homologous arms, yielding a 5'-phosphate and a 3'-hydroxyl group; requires a central core of homology in the junction. The consensus cleavage sequence is 5'-(A/T)TT(C/G)-3'. Cleavage occurs on the 3'-side of the TT dinucleotide at the point of strand exchange. HJ branch migration catalyzed by RuvA-RuvB allows RuvC to scan DNA until it finds its consensus sequence, where it cleaves and resolves the cruciform DNA. The chain is Crossover junction endodeoxyribonuclease RuvC from Methylobacterium radiotolerans (strain ATCC 27329 / DSM 1819 / JCM 2831 / NBRC 15690 / NCIMB 10815 / 0-1).